The chain runs to 431 residues: O-methyltransferase xanE (431 aa).

An S-adenosyl-L-methionine-binding site is contributed by Asp-283. His-330 functions as the Proton acceptor in the catalytic mechanism.

It belongs to the class I-like SAM-binding methyltransferase superfamily. Cation-independent O-methyltransferase family.

It participates in secondary metabolite biosynthesis. Its function is as follows. O-methyltransferase; part of the gene cluster that mediates the biosynthesis of the isocyanide xanthocillin and its derivatives. The first step of the pathway consists in the conversion of tyrosine into a vinyl-isonitrile intermediate by the isocyanide synthase xanB. Subsequent oxidative dimerization of this intermediate to form xanthocillin may involve the cytochrome P450 monooxygenase xanG, whose expression is coregulated with that of XanB. Xanthocillin can be further modified by the isonitrile hydratase-like protein xanA which introduces N-formyl groups and the methyltransferase xanE which introduces methyl groups, leading to the production of several derivatives including fumiformamide. Finally, fumiformamide can be subject to both oxidative and reductive cyclization to yield melanocins E and F, respectively. The polypeptide is O-methyltransferase xanE (Aspergillus fumigatus (strain ATCC MYA-4609 / CBS 101355 / FGSC A1100 / Af293) (Neosartorya fumigata)).